Reading from the N-terminus, the 25-residue chain is ATVKVTLVKSLNGRIANHKAXVXGL.

The protein belongs to the universal ribosomal protein uL30 family. In terms of assembly, part of the 50S ribosomal subunit.

The chain is Large ribosomal subunit protein uL30 (rpmD) from Pseudomonas putida (Arthrobacter siderocapsulatus).